The sequence spans 228 residues: Cytochrome c oxidase subunit 2 (228 aa).

At 1-14 the chain is on the mitochondrial intermembrane side; that stretch reads MAYPLQLGLQDASS. Residues 15–45 form a helical membrane-spanning segment; it reads PIMEELTNFHDHTLMIVFLISSLVLYLISLM. The Mitochondrial matrix segment spans residues 46–59; it reads LTTKLIHTSTMDAQ. A helical transmembrane segment spans residues 60–87; sequence EVETIWTILPAIILILIALPSLRILYMM. The Mitochondrial intermembrane portion of the chain corresponds to 88–228; the sequence is DEINNPVLTV…FENWSVSMTQ (141 aa). Cu cation-binding residues include histidine 161, cysteine 196, glutamate 198, cysteine 200, histidine 204, and methionine 207. Glutamate 198 contacts Mg(2+).

It belongs to the cytochrome c oxidase subunit 2 family. In terms of assembly, component of the cytochrome c oxidase (complex IV, CIV), a multisubunit enzyme composed of 14 subunits. The complex is composed of a catalytic core of 3 subunits MT-CO1, MT-CO2 and MT-CO3, encoded in the mitochondrial DNA, and 11 supernumerary subunits COX4I, COX5A, COX5B, COX6A, COX6B, COX6C, COX7A, COX7B, COX7C, COX8 and NDUFA4, which are encoded in the nuclear genome. The complex exists as a monomer or a dimer and forms supercomplexes (SCs) in the inner mitochondrial membrane with NADH-ubiquinone oxidoreductase (complex I, CI) and ubiquinol-cytochrome c oxidoreductase (cytochrome b-c1 complex, complex III, CIII), resulting in different assemblies (supercomplex SCI(1)III(2)IV(1) and megacomplex MCI(2)III(2)IV(2)). Found in a complex with TMEM177, COA6, COX18, COX20, SCO1 and SCO2. Interacts with TMEM177 in a COX20-dependent manner. Interacts with COX20. Interacts with COX16. Cu cation serves as cofactor.

The protein localises to the mitochondrion inner membrane. The catalysed reaction is 4 Fe(II)-[cytochrome c] + O2 + 8 H(+)(in) = 4 Fe(III)-[cytochrome c] + 2 H2O + 4 H(+)(out). Component of the cytochrome c oxidase, the last enzyme in the mitochondrial electron transport chain which drives oxidative phosphorylation. The respiratory chain contains 3 multisubunit complexes succinate dehydrogenase (complex II, CII), ubiquinol-cytochrome c oxidoreductase (cytochrome b-c1 complex, complex III, CIII) and cytochrome c oxidase (complex IV, CIV), that cooperate to transfer electrons derived from NADH and succinate to molecular oxygen, creating an electrochemical gradient over the inner membrane that drives transmembrane transport and the ATP synthase. Cytochrome c oxidase is the component of the respiratory chain that catalyzes the reduction of oxygen to water. Electrons originating from reduced cytochrome c in the intermembrane space (IMS) are transferred via the dinuclear copper A center (CU(A)) of subunit 2 and heme A of subunit 1 to the active site in subunit 1, a binuclear center (BNC) formed by heme A3 and copper B (CU(B)). The BNC reduces molecular oxygen to 2 water molecules using 4 electrons from cytochrome c in the IMS and 4 protons from the mitochondrial matrix. The sequence is that of Cytochrome c oxidase subunit 2 (MT-CO2) from Meriones shawi (Shaw's jird).